Reading from the N-terminus, the 296-residue chain is tRNA dimethylallyltransferase (296 aa).

An ATP-binding site is contributed by 2–9; it reads GPTASGKT. A substrate-binding site is contributed by 4–9; sequence TASGKT. Interaction with substrate tRNA regions lie at residues 27-30, 151-155, and 232-237; these read DSAL, QRLAR, and RCVGYR.

This sequence belongs to the IPP transferase family. In terms of assembly, monomer. Mg(2+) is required as a cofactor.

The enzyme catalyses adenosine(37) in tRNA + dimethylallyl diphosphate = N(6)-dimethylallyladenosine(37) in tRNA + diphosphate. In terms of biological role, catalyzes the transfer of a dimethylallyl group onto the adenine at position 37 in tRNAs that read codons beginning with uridine, leading to the formation of N6-(dimethylallyl)adenosine (i(6)A). This chain is tRNA dimethylallyltransferase, found in Shewanella pealeana (strain ATCC 700345 / ANG-SQ1).